A 367-amino-acid chain; its full sequence is mRNA-decapping enzyme-like protein (367 aa).

Disordered regions lie at residues 144-179, 196-246, and 299-333; these read PKAS…RDAP, NTAS…SSSP, and PNNA…PTGP. The span at 196 to 211 shows a compositional bias: polar residues; it reads NTASGSASGPYQSSAI. The segment covering 212–234 has biased composition (low complexity); that stretch reads PHQPHQPHQPTIAPPVAAAAPPQ. Polar residues predominate over residues 299–309; the sequence is PNNASHQQRSY. Pro residues predominate over residues 315–331; that stretch reads QPFPPPTPPPSLAPAPT.

The protein belongs to the DCP1 family. As to quaternary structure, homodimer. Component of the decapping complex. Interacts with DCP2 and DCP5. Interacts with BCHA1. Expressed in seedlings, mostly in root tips, root hairs, and the vascular system. Also present in roots, leaves, stems, and flowers.

The protein localises to the cytoplasm. Its subcellular location is the P-body. Functionally, as a component of the decapping complex, involved in the degradation of mRNAs. Essential for postembryonic development. The chain is mRNA-decapping enzyme-like protein from Arabidopsis thaliana (Mouse-ear cress).